We begin with the raw amino-acid sequence, 393 residues long: Cobalt-precorrin-5B C(1)-methyltransferase (393 aa).

The segment at 1–35 (MSDETRVGEAAEQAATPEKIRKGSARRERGNRTGF) is disordered. A compositionally biased stretch (basic and acidic residues) spans 18–31 (EKIRKGSARRERGN).

This sequence belongs to the CbiD family.

The enzyme catalyses Co-precorrin-5B + S-adenosyl-L-methionine = Co-precorrin-6A + S-adenosyl-L-homocysteine. Its pathway is cofactor biosynthesis; adenosylcobalamin biosynthesis; cob(II)yrinate a,c-diamide from sirohydrochlorin (anaerobic route): step 6/10. In terms of biological role, catalyzes the methylation of C-1 in cobalt-precorrin-5B to form cobalt-precorrin-6A. The polypeptide is Cobalt-precorrin-5B C(1)-methyltransferase (Dechloromonas aromatica (strain RCB)).